The sequence spans 290 residues: Energy-coupling factor transporter ATP-binding protein EcfA2 (290 aa).

In terms of domain architecture, ABC transporter spans 6–246; it reads EKVEHVYNAR…ADKLAAIGLS (241 aa). 40 to 47 contributes to the ATP binding site; it reads GHTGSGKS.

Belongs to the ABC transporter superfamily. Energy-coupling factor EcfA family. In terms of assembly, forms a stable energy-coupling factor (ECF) transporter complex composed of 2 membrane-embedded substrate-binding proteins (S component), 2 ATP-binding proteins (A component) and 2 transmembrane proteins (T component).

Its subcellular location is the cell membrane. ATP-binding (A) component of a common energy-coupling factor (ECF) ABC-transporter complex. Unlike classic ABC transporters this ECF transporter provides the energy necessary to transport a number of different substrates. This chain is Energy-coupling factor transporter ATP-binding protein EcfA2, found in Geobacillus kaustophilus (strain HTA426).